The primary structure comprises 480 residues: Glutamate--tRNA ligase (480 aa).

The short motif at 9-19 (PSPTGNLHIGT) is the 'HIGH' region element. The 'KMSKS' region signature appears at 247–251 (KLSKR). Position 250 (lysine 250) interacts with ATP.

Belongs to the class-I aminoacyl-tRNA synthetase family. Glutamate--tRNA ligase type 1 subfamily. In terms of assembly, monomer.

It is found in the cytoplasm. The enzyme catalyses tRNA(Glu) + L-glutamate + ATP = L-glutamyl-tRNA(Glu) + AMP + diphosphate. Functionally, catalyzes the attachment of glutamate to tRNA(Glu) in a two-step reaction: glutamate is first activated by ATP to form Glu-AMP and then transferred to the acceptor end of tRNA(Glu). The polypeptide is Glutamate--tRNA ligase (Nostoc sp. (strain PCC 7120 / SAG 25.82 / UTEX 2576)).